Here is a 684-residue protein sequence, read N- to C-terminus: DNA ligase (684 aa).

Residues 46 to 50 (DYVYD), 100 to 101 (SL), and E130 contribute to the NAD(+) site. The N6-AMP-lysine intermediate role is filled by K132. Residues R153, E187, K303, and K327 each coordinate NAD(+). Zn(2+)-binding residues include C421, C424, C439, and C444. One can recognise a BRCT domain in the interval 604–684 (DEKNYFFNKR…DFINLSNAKK (81 aa)).

Belongs to the NAD-dependent DNA ligase family. LigA subfamily. It depends on Mg(2+) as a cofactor. Mn(2+) serves as cofactor.

It catalyses the reaction NAD(+) + (deoxyribonucleotide)n-3'-hydroxyl + 5'-phospho-(deoxyribonucleotide)m = (deoxyribonucleotide)n+m + AMP + beta-nicotinamide D-nucleotide.. DNA ligase that catalyzes the formation of phosphodiester linkages between 5'-phosphoryl and 3'-hydroxyl groups in double-stranded DNA using NAD as a coenzyme and as the energy source for the reaction. It is essential for DNA replication and repair of damaged DNA. The protein is DNA ligase of Oenococcus oeni (strain ATCC BAA-331 / PSU-1).